The sequence spans 729 residues: Fatty acid oxidation complex subunit alpha (729 aa).

The segment at 1–189 (MLYKGDTLYL…KIGLVDGVVA (189 aa)) is enoyl-CoA hydratase/isomerase. Residue aspartate 296 participates in substrate binding. Residues 311–729 (ETPKHAAVLG…ARPVGALKTA (419 aa)) are 3-hydroxyacyl-CoA dehydrogenase. Residues methionine 324, aspartate 343, 400 to 402 (VVE), lysine 407, and serine 429 contribute to the NAD(+) site. Histidine 450 functions as the For 3-hydroxyacyl-CoA dehydrogenase activity in the catalytic mechanism. Asparagine 453 contributes to the NAD(+) binding site. 2 residues coordinate substrate: asparagine 500 and tyrosine 660.

The protein in the N-terminal section; belongs to the enoyl-CoA hydratase/isomerase family. This sequence in the C-terminal section; belongs to the 3-hydroxyacyl-CoA dehydrogenase family. In terms of assembly, heterotetramer of two alpha chains (FadB) and two beta chains (FadA).

The enzyme catalyses a (3S)-3-hydroxyacyl-CoA + NAD(+) = a 3-oxoacyl-CoA + NADH + H(+). The catalysed reaction is a (3S)-3-hydroxyacyl-CoA = a (2E)-enoyl-CoA + H2O. It catalyses the reaction a 4-saturated-(3S)-3-hydroxyacyl-CoA = a (3E)-enoyl-CoA + H2O. It carries out the reaction (3S)-3-hydroxybutanoyl-CoA = (3R)-3-hydroxybutanoyl-CoA. The enzyme catalyses a (3Z)-enoyl-CoA = a 4-saturated (2E)-enoyl-CoA. The catalysed reaction is a (3E)-enoyl-CoA = a 4-saturated (2E)-enoyl-CoA. It participates in lipid metabolism; fatty acid beta-oxidation. Involved in the aerobic and anaerobic degradation of long-chain fatty acids via beta-oxidation cycle. Catalyzes the formation of 3-oxoacyl-CoA from enoyl-CoA via L-3-hydroxyacyl-CoA. It can also use D-3-hydroxyacyl-CoA and cis-3-enoyl-CoA as substrate. This Klebsiella pneumoniae subsp. pneumoniae (strain ATCC 700721 / MGH 78578) protein is Fatty acid oxidation complex subunit alpha.